The following is a 397-amino-acid chain: Probable sugar efflux transporter (397 aa).

A run of 12 helical transmembrane segments spans residues 15-35 (VIVM…PVAL), 51-71 (GLMI…CMLM), 80-100 (LLIS…FAWN), 103-123 (VLLI…SITA), 137-157 (QALG…LPLG), 169-189 (TFTL…RLLP), 209-229 (PMLI…FTAY), 246-266 (KATA…VLFS), 277-297 (LLSS…VSGI), 299-319 (GAIF…SLAM), 333-353 (VATA…ALIG), and 365-385 (IGYV…LMFL).

This sequence belongs to the major facilitator superfamily. SotB (TC 2.A.1.2) family.

Its subcellular location is the cell inner membrane. Involved in the efflux of sugars. The physiological role may be the reduction of the intracellular concentration of toxic sugars or sugar metabolites. This Mannheimia succiniciproducens (strain KCTC 0769BP / MBEL55E) protein is Probable sugar efflux transporter.